A 62-amino-acid polypeptide reads, in one-letter code: Cytotoxin homolog (62 aa).

4 disulfides stabilise this stretch: C3–C22, C15–C40, C44–C55, and C56–C61.

It belongs to the three-finger toxin family. Short-chain subfamily. Orphan group XV sub-subfamily. In terms of tissue distribution, expressed by the venom gland.

It localises to the secreted. It is found in the target cell membrane. Its function is as follows. Has low cytotoxic activity. The protein is Cytotoxin homolog of Naja kaouthia (Monocled cobra).